A 337-amino-acid chain; its full sequence is Casein kinase I isoform alpha (337 aa).

At Ala-2 the chain carries N-acetylalanine. Ser-4 carries the post-translational modification Phosphoserine. Lys-8 is modified (N6-acetyllysine). Positions 17-285 constitute a Protein kinase domain; it reads YKLVRKIGSG…YLRQLFRILF (269 aa). Residues 23-31 and Lys-46 contribute to the ATP site; that span reads IGSGSFGDI. Asp-136 functions as the Proton acceptor in the catalytic mechanism. Positions 309-325 are enriched in low complexity; sequence AASSSGQGQQAQTPTGK. Residues 309–337 are disordered; it reads AASSSGQGQQAQTPTGKQTDKTKSNMKGF.

Belongs to the protein kinase superfamily. CK1 Ser/Thr protein kinase family. Casein kinase I subfamily. As to quaternary structure, interacts with the Axin complex. Interacts with TUT1, leading to TUT1 phosphorylation. Interacts with FAM83A, FAM83B, FAM83C, FAM83D, FAM83E, FAM83F, FAM83G and FAM83H (via DUF1669). Interaction with FAM83H recruits CSNK1A1 to keratin filaments. In terms of processing, phosphorylated by MTOR in response to mitogenic stimulation, leading to its activation.

The protein resides in the cytoplasm. The protein localises to the cytoskeleton. It is found in the microtubule organizing center. Its subcellular location is the centrosome. It localises to the chromosome. The protein resides in the centromere. The protein localises to the kinetochore. It is found in the nucleus speckle. Its subcellular location is the cilium basal body. It localises to the spindle. It catalyses the reaction L-seryl-[protein] + ATP = O-phospho-L-seryl-[protein] + ADP + H(+). It carries out the reaction L-threonyl-[protein] + ATP = O-phospho-L-threonyl-[protein] + ADP + H(+). Functionally, casein kinases are operationally defined by their preferential utilization of acidic proteins such as caseins as substrates. Can phosphorylate a large number of proteins. Participates in Wnt signaling. Phosphorylates CTNNB1 at 'Ser-45'. May phosphorylate PER1 and PER2. May play a role in segregating chromosomes during mitosis. May play a role in keratin cytoskeleton disassembly and thereby, it may regulate epithelial cell migration. Acts as a positive regulator of mTORC1 and mTORC2 signaling in response to nutrients by mediating phosphorylation of DEPTOR inhibitor. Acts as an inhibitor of NLRP3 inflammasome assembly by mediating phosphorylation of NLRP3. In Mus musculus (Mouse), this protein is Casein kinase I isoform alpha (Csnk1a1).